A 340-amino-acid chain; its full sequence is Gallate dioxygenase (340 aa).

Residue H45 is the Proton donor of the active site. H113 (proton acceptor) is an active-site residue.

Belongs to the LigB/MhpB extradiol dioxygenase family. Fe(2+) serves as cofactor.

It carries out the reaction 3,4,5-trihydroxybenzoate + O2 = (1E)-4-oxobut-1-ene-1,2,4-tricarboxylate + 2 H(+). In terms of biological role, ring-cleavage dioxygenase that acts specifically on gallate to produce the keto-tautomer of 4-oxalomesaconate. Mediates the first step of gallate degradation pathway. In Pseudomonas putida (strain ATCC 47054 / DSM 6125 / CFBP 8728 / NCIMB 11950 / KT2440), this protein is Gallate dioxygenase (galA).